A 349-amino-acid chain; its full sequence is Ribosomal RNA large subunit methyltransferase M (349 aa).

S-adenosyl-L-methionine is bound by residues Ser183, 216-219 (APGG), Asp235, Asp255, and Asp271. Lys300 serves as the catalytic Proton acceptor.

This sequence belongs to the class I-like SAM-binding methyltransferase superfamily. RNA methyltransferase RlmE family. RlmM subfamily. Monomer.

It localises to the cytoplasm. It catalyses the reaction cytidine(2498) in 23S rRNA + S-adenosyl-L-methionine = 2'-O-methylcytidine(2498) in 23S rRNA + S-adenosyl-L-homocysteine + H(+). Catalyzes the 2'-O-methylation at nucleotide C2498 in 23S rRNA. This is Ribosomal RNA large subunit methyltransferase M from Stutzerimonas stutzeri (strain A1501) (Pseudomonas stutzeri).